Consider the following 458-residue polypeptide: Chromosomal replication initiator protein DnaA (458 aa).

The segment at 1–79 (MSLAIWQECL…ENPNHSVKIR (79 aa)) is domain I, interacts with DnaA modulators. The segment at 79–120 (RLMVGNVSSVEKKPAKQIPTQAPLTNQPWEGESKAHRVPHKS) is domain II. Residues 92–114 (PAKQIPTQAPLTNQPWEGESKAH) form a disordered region. A compositionally biased stretch (polar residues) spans 96–106 (IPTQAPLTNQP). The interval 121–338 (NLIKKYTFDN…GAIANISAKA (218 aa)) is domain III, AAA+ region. The ATP site is built by Gly165, Gly167, Lys168, and Thr169. The domain IV, binds dsDNA stretch occupies residues 339–458 (QFTGQGITIS…YKILIRTLSM (120 aa)).

The protein belongs to the DnaA family. As to quaternary structure, oligomerizes as a right-handed, spiral filament on DNA at oriC.

It localises to the cytoplasm. Functionally, plays an essential role in the initiation and regulation of chromosomal replication. ATP-DnaA binds to the origin of replication (oriC) to initiate formation of the DNA replication initiation complex once per cell cycle. Binds the DnaA box (a 9 base pair repeat at the origin) and separates the double-stranded (ds)DNA. Forms a right-handed helical filament on oriC DNA; dsDNA binds to the exterior of the filament while single-stranded (ss)DNA is stabiized in the filament's interior. The ATP-DnaA-oriC complex binds and stabilizes one strand of the AT-rich DNA unwinding element (DUE), permitting loading of DNA polymerase. After initiation quickly degrades to an ADP-DnaA complex that is not apt for DNA replication. Binds acidic phospholipids. This chain is Chromosomal replication initiator protein DnaA, found in Psychromonas ingrahamii (strain DSM 17664 / CCUG 51855 / 37).